A 98-amino-acid polypeptide reads, in one-letter code: Hainantoxin-XVII.2 (98 aa).

A signal peptide spans 1–40; sequence MTTVGVSLFRRSPEKITMKIAAFLGLSFLLIASYVLICEA. Residues 41–64 constitute a propeptide that is removed on maturation; that stretch reads QHPGFQELLILEENMRDPENSKER. Intrachain disulfides connect Cys-66/Cys-81, Cys-73/Cys-85, and Cys-80/Cys-95.

Belongs to the hainantoxin family. 17 subfamily. As to expression, expressed by the venom gland.

The protein resides in the secreted. In terms of biological role, putative ion channel inhibitor. This chain is Hainantoxin-XVII.2, found in Cyriopagopus hainanus (Chinese bird spider).